We begin with the raw amino-acid sequence, 663 residues long: Transmembrane 9 superfamily member 2 (663 aa).

An N-terminal signal peptide occupies residues 1-28 (MSARLPVLSPPRWPRLLLLSLLLLGAVP). Over 29 to 300 (GPRRSGAFYL…LESMPHTHIQ (272 aa)) the chain is Lumenal. Residues 301 to 321 (WFSIMNSLVIVLFLSGMVAMI) form a helical membrane-spanning segment. The Cytoplasmic portion of the chain corresponds to 322 to 374 (MLRTLHKDIARYNQMDSTEDAQEEFGWKLVHGDIFRPPRKGMLLSVFLGSGTQ). The chain crosses the membrane as a helical span at residues 375-395 (ILIMTFVTLFFACLGFLSPAN). The Lumenal portion of the chain corresponds to 396 to 398 (RGA). Residues 399 to 419 (LMTCAVVLWVLLGTPAGYVAA) form a helical membrane-spanning segment. Over 420-437 (RFYKSFGGEKWKTNVLLT) the chain is Cytoplasmic. Residues 438-458 (SFLCPGIVFADFFIMNLILWG) form a helical membrane-spanning segment. At 459–466 (EGSSAAIP) the chain is on the lumenal side. Residues 467–487 (FGTLVAILALWFCISVPLTFI) traverse the membrane as a helical segment. Over 488 to 522 (GAYFGFKKNAIEHPVRTNQIPRQIPEQSFYTKPLP) the chain is Cytoplasmic. The chain crosses the membrane as a helical span at residues 523-543 (GIIMGGILPFGCIFIQLFFIL). Topologically, residues 544 to 554 (NSIWSHQMYYM) are lumenal. Residues 555 to 575 (FGFLFLVFIILVITCSEATIL) form a helical membrane-spanning segment. Topologically, residues 576 to 591 (LCYFHLCAEDYHWQWR) are cytoplasmic. A helical membrane pass occupies residues 592–612 (SFLTSGFTAVYFLIYAVHYFF). The Lumenal segment spans residues 613–631 (SKLQITGTASTILYFGYTM). A helical transmembrane segment spans residues 632-652 (IMVLIFFLFTGTIGFFACFWF). Residues 653-663 (VTKIYSVVKVD) lie on the Cytoplasmic side of the membrane.

The protein belongs to the nonaspanin (TM9SF) (TC 9.A.2) family. As to expression, ubiquitously expressed. Especially abundant in pancreas, highly expressed in kidney, lower levels in heart, brain, skeletal muscle and placenta. Lowest expression in lung and liver.

It is found in the endosome membrane. Its subcellular location is the golgi outpost. It localises to the cytoplasm. The protein resides in the cytoskeleton. The protein localises to the microtubule organizing center. In terms of biological role, in the intracellular compartments, may function as a channel or small molecule transporter. This chain is Transmembrane 9 superfamily member 2 (TM9SF2), found in Homo sapiens (Human).